Consider the following 181-residue polypeptide: Large ribosomal subunit protein uL16 (181 aa).

It belongs to the universal ribosomal protein uL16 family.

The polypeptide is Large ribosomal subunit protein uL16 (Pyrococcus horikoshii (strain ATCC 700860 / DSM 12428 / JCM 9974 / NBRC 100139 / OT-3)).